A 481-amino-acid chain; its full sequence is MKPLKLNYFFIGIITLLLALALWPSIPWRSSQDVQLRQILSRGELRISTVNSPLTYAMSNGSPTGLDYELAKRFADYLGVKLVVSSRKNLDELFDDLDGDDADLLAAGLIYNHERLERFRAGPTYYSISQQMVYRLGSPRPKTLDKLQGRLVVTSGSAHAATLRDLKAEKYPQLSWESASDQSTQELLKQVADGKLDYTLGDSVTIGLMQRIHPQLAVAFDLSDEEPVIWYMRRSHDDSLSAALLDFFSQLVEDGTLARLEEKYLGHVGEFDYVDTTTFLSAIDETLPDLRPLFEKYATDIDWKLLAAISYQESHWNPLATSPTGVRGLMMLTRNTAESLNVTDRVDPEQSIRGGAQYMSHMMQKMPDTIPEDEKIWFALASYNMGYAHLLDARKLTEKQKGNPDSWVDVKMRLPMLSQKRYYTQTTYGYARGHEAYNYVENIRRYMVSLEGYLIEKEAKVQQQTQIALGYPAVPLTKVPE.

The first 21 residues, 1–21 (MKPLKLNYFFIGIITLLLALA), serve as a signal peptide directing secretion. A non-LT domain region spans residues 22 to 268 (LWPSIPWRSS…RLEEKYLGHV (247 aa)). An LT domain region spans residues 269-481 (GEFDYVDTTT…PAVPLTKVPE (213 aa)). Glutamate 313 is an active-site residue.

It in the N-terminal section; belongs to the bacterial solute-binding protein 3 family. The protein in the C-terminal section; belongs to the transglycosylase Slt family.

The protein localises to the cell outer membrane. The enzyme catalyses Exolytic cleavage of the (1-&gt;4)-beta-glycosidic linkage between N-acetylmuramic acid (MurNAc) and N-acetylglucosamine (GlcNAc) residues in peptidoglycan, from either the reducing or the non-reducing ends of the peptidoglycan chains, with concomitant formation of a 1,6-anhydrobond in the MurNAc residue.. In terms of biological role, murein-degrading enzyme that degrades murein glycan strands and insoluble, high-molecular weight murein sacculi, with the concomitant formation of a 1,6-anhydromuramoyl product. Lytic transglycosylases (LTs) play an integral role in the metabolism of the peptidoglycan (PG) sacculus. Their lytic action creates space within the PG sacculus to allow for its expansion as well as for the insertion of various structures such as secretion systems and flagella. This is Membrane-bound lytic murein transglycosylase F from Pectobacterium atrosepticum (strain SCRI 1043 / ATCC BAA-672) (Erwinia carotovora subsp. atroseptica).